Reading from the N-terminus, the 399-residue chain is Coiled-coil domain-containing protein 85C-B (399 aa).

Coiled-coil stretches lie at residues 52-84 (NRSL…ELCC) and 113-144 (KEVS…DIIL). Residues 151–199 (NGAGSRSSIDSQSSLSNLNGGSGTVRDVGDGSSTSSGGSAGSPDHHHNH) are disordered. The segment covering 155–169 (SRSSIDSQSSLSNLN) has biased composition (low complexity).

It belongs to the CCDC85 family.

It localises to the cell junction. Its subcellular location is the tight junction. It is found in the adherens junction. Its function is as follows. May play a role in cell-cell adhesion and epithelium development through its interaction with proteins of the beta-catenin family. May play an important role in cortical development, especially in the maintenance of radial glia. The polypeptide is Coiled-coil domain-containing protein 85C-B (ccdc85cb) (Danio rerio (Zebrafish)).